The sequence spans 317 residues: Acetyl-coenzyme A carboxylase carboxyl transferase subunit alpha (317 aa).

Residues 37–292 enclose the CoA carboxyltransferase C-terminal domain; that stretch reads QISQKLEDTK…EEYILKAFNE (256 aa).

This sequence belongs to the AccA family. As to quaternary structure, acetyl-CoA carboxylase is a heterohexamer composed of biotin carboxyl carrier protein (AccB), biotin carboxylase (AccC) and two subunits each of ACCase subunit alpha (AccA) and ACCase subunit beta (AccD).

The protein localises to the cytoplasm. The enzyme catalyses N(6)-carboxybiotinyl-L-lysyl-[protein] + acetyl-CoA = N(6)-biotinyl-L-lysyl-[protein] + malonyl-CoA. It functions in the pathway lipid metabolism; malonyl-CoA biosynthesis; malonyl-CoA from acetyl-CoA: step 1/1. In terms of biological role, component of the acetyl coenzyme A carboxylase (ACC) complex. First, biotin carboxylase catalyzes the carboxylation of biotin on its carrier protein (BCCP) and then the CO(2) group is transferred by the carboxyltransferase to acetyl-CoA to form malonyl-CoA. This chain is Acetyl-coenzyme A carboxylase carboxyl transferase subunit alpha, found in Flavobacterium psychrophilum (strain ATCC 49511 / DSM 21280 / CIP 103535 / JIP02/86).